The sequence spans 205 residues: Disintegrin-like leberagin-C (205 aa).

One can recognise a Disintegrin domain in the interval 4–90; sequence PPVCGNELLE…DCPIDRFHRN (87 aa). 9 cysteine pairs are disulfide-bonded: Cys7–Cys26, Cys18–Cys36, Cys62–Cys82, Cys69–Cys94, Cys101–Cys106, Cys113–Cys128, Cys151–Cys158, Cys163–Cys171, and Cys193–Cys198. Positions 68 to 70 match the D/ECD-tripeptide motif; it reads ECD. Asn120 carries an N-linked (GlcNAc...) asparagine glycan.

Belongs to the venom metalloproteinase (M12B) family. P-III subfamily. P-IIIb sub-subfamily. In terms of assembly, monomer. As to expression, expressed by the venom gland.

The protein resides in the secreted. Functionally, inhibits platelet aggregation induced by thrombin and arachidonic acid with IC(50) of 40 and 50 nM respectively (in rabbit platetelet-rich plasma). It also inhibits the adhesion of melanoma tumor cells on fibrinogen and fibronectin, by interfering with the function of alpha-V/beta-3 (ITGAV/ITGB3) and, to a lesser extent, with alpha-V/beta-6 (ITGAV/ITGB6) and alpha-5/beta-1 (ITGA5/ITGB1) integrins. The sequence is that of Disintegrin-like leberagin-C from Macrovipera lebetina transmediterranea (Blunt-nosed viper).